Reading from the N-terminus, the 447-residue chain is Kynurenine 3-monooxygenase (447 aa).

This sequence belongs to the aromatic-ring hydroxylase family. KMO subfamily. The cofactor is FAD.

It carries out the reaction L-kynurenine + NADPH + O2 + H(+) = 3-hydroxy-L-kynurenine + NADP(+) + H2O. Its pathway is cofactor biosynthesis; NAD(+) biosynthesis; quinolinate from L-kynurenine: step 1/3. Functionally, catalyzes the hydroxylation of L-kynurenine (L-Kyn) to form 3-hydroxy-L-kynurenine (L-3OHKyn). Required for synthesis of quinolinic acid. This Christiangramia forsetii (strain DSM 17595 / CGMCC 1.15422 / KT0803) (Gramella forsetii) protein is Kynurenine 3-monooxygenase.